The following is a 563-amino-acid chain: Lengsin (563 aa).

The interval 1 to 115 (MTDEGDLAQE…PNTDPTRYNA (115 aa)) is disordered. The span at 26–37 (SKLRRARRKVTK) shows a compositional bias: basic residues. Polar residues-rich tracts occupy residues 51–62 (ANSSEMSRNQIA) and 105–115 (SPNTDPTRYNA). The region spanning 137–231 (NHLQFVRFEA…VICDTFTVTG (95 aa)) is the GS beta-grasp domain. The GS catalytic domain occupies 238–563 (PRYIAKRQLR…EGNKFLEYFI (326 aa)).

The protein belongs to the glutamine synthetase family. As to quaternary structure, dodecamer. Interacts with BFSP2 and VIM. In terms of tissue distribution, expressed in lens.

In terms of biological role, may act as a component of the cytoskeleton or as a chaperone for the reorganization of intermediate filament proteins during terminal differentiation in the lens. Does not seem to have enzymatic activity. The protein is Lengsin (Lgsn) of Mus musculus (Mouse).